Consider the following 240-residue polypeptide: Large ribosomal subunit protein uL2 (240 aa).

Residues 1-20 are compositionally biased toward polar residues; it reads MGKRLQSQNRGKGTPRYTSP. Disordered stretches follow at residues 1–33 and 204–240; these read MGKR…YRKF and PFGG…TGKR. 2 stretches are compositionally biased toward basic residues: residues 21-30 and 224-240; these read THKRKGAVKY and SPGR…TGKR.

The protein belongs to the universal ribosomal protein uL2 family. In terms of assembly, part of the 50S ribosomal subunit. Forms a bridge to the 30S subunit in the 70S ribosome.

In terms of biological role, one of the primary rRNA binding proteins. Required for association of the 30S and 50S subunits to form the 70S ribosome, for tRNA binding and peptide bond formation. It has been suggested to have peptidyltransferase activity; this is somewhat controversial. Makes several contacts with the 16S rRNA in the 70S ribosome. In Methanococcus aeolicus (strain ATCC BAA-1280 / DSM 17508 / OCM 812 / Nankai-3), this protein is Large ribosomal subunit protein uL2.